Here is a 215-residue protein sequence, read N- to C-terminus: Probable phosphoglycerate mutase GpmB (215 aa).

Residues arginine 8–asparagine 15, glutamine 21–glycine 22, arginine 58, lysine 60, glutamate 82–methionine 85, arginine 104–arginine 105, and glycine 151–isoleucine 152 contribute to the substrate site. Histidine 9 serves as the catalytic Tele-phosphohistidine intermediate. Glutamate 82 functions as the Proton donor/acceptor in the catalytic mechanism.

This sequence belongs to the phosphoglycerate mutase family. GpmB subfamily.

It carries out the reaction (2R)-2-phosphoglycerate = (2R)-3-phosphoglycerate. It functions in the pathway carbohydrate degradation; glycolysis; pyruvate from D-glyceraldehyde 3-phosphate: step 3/5. The polypeptide is Probable phosphoglycerate mutase GpmB (Salmonella choleraesuis (strain SC-B67)).